A 515-amino-acid polypeptide reads, in one-letter code: GMP synthase [glutamine-hydrolyzing] (515 aa).

Positions 6-198 (KVIIIDYGSQ…LFHVAKLKAD (193 aa)) constitute a Glutamine amidotransferase type-1 domain. Catalysis depends on Cys-83, which acts as the Nucleophile. Residues His-172 and Glu-174 contribute to the active site. A GMPS ATP-PPase domain is found at 199–390 (WTMSSFVERA…LGLPDFIIWR (192 aa)). 226 to 232 (SGGIDST) contributes to the ATP binding site.

Homodimer.

It carries out the reaction XMP + L-glutamine + ATP + H2O = GMP + L-glutamate + AMP + diphosphate + 2 H(+). It functions in the pathway purine metabolism; GMP biosynthesis; GMP from XMP (L-Gln route): step 1/1. In terms of biological role, catalyzes the synthesis of GMP from XMP. This chain is GMP synthase [glutamine-hydrolyzing], found in Nitratidesulfovibrio vulgaris (strain DSM 19637 / Miyazaki F) (Desulfovibrio vulgaris).